The following is a 241-amino-acid chain: Small ribosomal subunit protein uS2 (241 aa).

Belongs to the universal ribosomal protein uS2 family.

The chain is Small ribosomal subunit protein uS2 from Yersinia enterocolitica serotype O:8 / biotype 1B (strain NCTC 13174 / 8081).